The sequence spans 885 residues: Chromatin assembly factor 1 subunit A-B (885 aa).

Disordered stretches follow at residues 1–24, 115–157, 176–361, and 536–605; these read MPGKEAAGDVMKSSTKSNTKKMVQ, EDSN…NEEC, LDKP…EEEK, and VDSD…QKLK. Low complexity predominate over residues 12–21; it reads KSSTKSNTKK. Composition is skewed to polar residues over residues 116–128, 134–157, and 182–193; these read DSNISTSNDSPLN, QLANGTVSPERSTTNAPLSTNEEC, and SAASCTSVSNFS. Composition is skewed to low complexity over residues 211–227 and 237–254; these read VSVSSSSSPVSLSSPDV and SSPSTSTTPTGKATSNKT. Residues 251-376 adopt a coiled-coil conformation; it reads SNKTSAEKKK…KAEITRFLQK (126 aa). The segment covering 255 to 361 has biased composition (basic and acidic residues); that stretch reads SAEKKKTKDK…EEKRLKEEEK (107 aa). Composition is skewed to acidic residues over residues 536–548 and 557–573; these read VDSDEEWEEEEPG and ENEDDDPKEEEDEDDDG. The tract at residues 629–665 is necessary for homodimerization, competence for chromatin assembly; that stretch reads CVWCDSKASEIRLLQKFSACILESPAVEEELTQDISS.

It belongs to the CHAF1A family. As to quaternary structure, homodimer.

Its subcellular location is the nucleus. In terms of biological role, involved in chromatin assembly in DNA replication and DNA repair. This is Chromatin assembly factor 1 subunit A-B (chaf1a-b) from Xenopus laevis (African clawed frog).